A 426-amino-acid chain; its full sequence is 3-phosphoshikimate 1-carboxyvinyltransferase (426 aa).

3-phosphoshikimate-binding residues include lysine 21, serine 22, and arginine 26. Position 21 (lysine 21) interacts with phosphoenolpyruvate. Positions 91 and 119 each coordinate phosphoenolpyruvate. Serine 162, serine 163, glutamine 164, serine 190, aspartate 304, and lysine 331 together coordinate 3-phosphoshikimate. Glutamine 164 provides a ligand contact to phosphoenolpyruvate. Aspartate 304 functions as the Proton acceptor in the catalytic mechanism. Phosphoenolpyruvate-binding residues include arginine 335, arginine 377, and lysine 403.

The protein belongs to the EPSP synthase family. Monomer.

Its subcellular location is the cytoplasm. It carries out the reaction 3-phosphoshikimate + phosphoenolpyruvate = 5-O-(1-carboxyvinyl)-3-phosphoshikimate + phosphate. The protein operates within metabolic intermediate biosynthesis; chorismate biosynthesis; chorismate from D-erythrose 4-phosphate and phosphoenolpyruvate: step 6/7. Its function is as follows. Catalyzes the transfer of the enolpyruvyl moiety of phosphoenolpyruvate (PEP) to the 5-hydroxyl of shikimate-3-phosphate (S3P) to produce enolpyruvyl shikimate-3-phosphate and inorganic phosphate. This chain is 3-phosphoshikimate 1-carboxyvinyltransferase, found in Clostridium kluyveri (strain ATCC 8527 / DSM 555 / NBRC 12016 / NCIMB 10680 / K1).